The following is a 51-amino-acid chain: Large ribosomal subunit protein eL39 (51 aa).

Basic residues predominate over residues 1–15; the sequence is MPSHKSFRTKQKLAK. Residues 1 to 21 form a disordered region; that stretch reads MPSHKSFRTKQKLAKAARQNR.

Belongs to the eukaryotic ribosomal protein eL39 family. As to quaternary structure, component of the large ribosomal subunit (LSU). Mature yeast ribosomes consist of a small (40S) and a large (60S) subunit. The 40S small subunit contains 1 molecule of ribosomal RNA (18S rRNA) and at least 33 different proteins. The large 60S subunit contains 3 rRNA molecules (25S, 5.8S and 5S rRNA) and at least 46 different proteins. eL39 interacts with yih1.

The protein localises to the cytoplasm. In terms of biological role, component of the ribosome, a large ribonucleoprotein complex responsible for the synthesis of proteins in the cell. The small ribosomal subunit (SSU) binds messenger RNAs (mRNAs) and translates the encoded message by selecting cognate aminoacyl-transfer RNA (tRNA) molecules. The large subunit (LSU) contains the ribosomal catalytic site termed the peptidyl transferase center (PTC), which catalyzes the formation of peptide bonds, thereby polymerizing the amino acids delivered by tRNAs into a polypeptide chain. The nascent polypeptides leave the ribosome through a tunnel in the LSU and interact with protein factors that function in enzymatic processing, targeting, and the membrane insertion of nascent chains at the exit of the ribosomal tunnel. The sequence is that of Large ribosomal subunit protein eL39 (rpl39) from Schizosaccharomyces pombe (strain 972 / ATCC 24843) (Fission yeast).